A 474-amino-acid chain; its full sequence is Trigger factor (474 aa).

The region spanning 171–258 is the PPIase FKBP-type domain; that stretch reads GDVAVIDFQG…LKELKTRDLP (88 aa). The interval 441–474 is disordered; it reads TEVDAASATVETTATETAEEAPEAPKAKKGKKKA. The span at 444 to 456 shows a compositional bias: low complexity; that stretch reads DAASATVETTATE.

The protein belongs to the FKBP-type PPIase family. Tig subfamily.

The protein localises to the cytoplasm. The enzyme catalyses [protein]-peptidylproline (omega=180) = [protein]-peptidylproline (omega=0). In terms of biological role, involved in protein export. Acts as a chaperone by maintaining the newly synthesized protein in an open conformation. Functions as a peptidyl-prolyl cis-trans isomerase. This Synechococcus sp. (strain ATCC 27144 / PCC 6301 / SAUG 1402/1) (Anacystis nidulans) protein is Trigger factor.